We begin with the raw amino-acid sequence, 272 residues long: HMP-PP phosphatase (272 aa).

Catalysis depends on Asp8, which acts as the Nucleophile. Residues Asp8, Asp10, and Asp212 each contribute to the Mg(2+) site.

This sequence belongs to the HAD-like hydrolase superfamily. Cof family. The cofactor is Mg(2+).

It carries out the reaction 4-amino-2-methyl-5-(diphosphooxymethyl)pyrimidine + H2O = 4-amino-2-methyl-5-(phosphooxymethyl)pyrimidine + phosphate + H(+). Functionally, catalyzes the hydrolysis of 4-amino-2-methyl-5-hydroxymethylpyrimidine pyrophosphate (HMP-PP) to 4-amino-2-methyl-5-hydroxymethylpyrimidine phosphate (HMP-P). This is HMP-PP phosphatase from Escherichia coli (strain 55989 / EAEC).